The primary structure comprises 269 residues: Diaminopimelate epimerase (269 aa).

Substrate-binding residues include Asn15 and Asn66. Cys75 acts as the Proton donor in catalysis. Residues 76-77 (GN), Asn152, Asn185, and 203-204 (ER) contribute to the substrate site. Cys212 functions as the Proton acceptor in the catalytic mechanism. A substrate-binding site is contributed by 213-214 (GT).

The protein belongs to the diaminopimelate epimerase family. As to quaternary structure, homodimer.

It localises to the cytoplasm. It carries out the reaction (2S,6S)-2,6-diaminopimelate = meso-2,6-diaminopimelate. It functions in the pathway amino-acid biosynthesis; L-lysine biosynthesis via DAP pathway; DL-2,6-diaminopimelate from LL-2,6-diaminopimelate: step 1/1. In terms of biological role, catalyzes the stereoinversion of LL-2,6-diaminopimelate (L,L-DAP) to meso-diaminopimelate (meso-DAP), a precursor of L-lysine and an essential component of the bacterial peptidoglycan. This Parabacteroides distasonis (strain ATCC 8503 / DSM 20701 / CIP 104284 / JCM 5825 / NCTC 11152) protein is Diaminopimelate epimerase.